A 220-amino-acid polypeptide reads, in one-letter code: Superoxide dismutase [Fe] (220 aa).

Fe cation contacts are provided by His-26, His-73, Asp-164, and His-168.

Belongs to the iron/manganese superoxide dismutase family. In terms of assembly, homodimer. The cofactor is Fe cation.

The catalysed reaction is 2 superoxide + 2 H(+) = H2O2 + O2. In terms of biological role, destroys superoxide anion radicals which are normally produced within the cells and which are toxic to biological systems. The protein is Superoxide dismutase [Fe] (sodB) of Campylobacter jejuni subsp. jejuni serotype O:2 (strain ATCC 700819 / NCTC 11168).